Reading from the N-terminus, the 309-residue chain is UDP-N-acetylenolpyruvoylglucosamine reductase (309 aa).

An FAD-binding PCMH-type domain is found at 33-198; the sequence is RVGGPAQVLF…TSARFRGTPA (166 aa). Arginine 178 is an active-site residue. Catalysis depends on serine 227, which acts as the Proton donor. Glutamate 297 is a catalytic residue.

The protein belongs to the MurB family. FAD serves as cofactor.

It localises to the cytoplasm. It catalyses the reaction UDP-N-acetyl-alpha-D-muramate + NADP(+) = UDP-N-acetyl-3-O-(1-carboxyvinyl)-alpha-D-glucosamine + NADPH + H(+). It functions in the pathway cell wall biogenesis; peptidoglycan biosynthesis. In terms of biological role, cell wall formation. The polypeptide is UDP-N-acetylenolpyruvoylglucosamine reductase (Rhodopseudomonas palustris (strain HaA2)).